The sequence spans 99 residues: Putative protein YgeP (99 aa).

This Escherichia coli (strain K12) protein is Putative protein YgeP (ygeP).